Here is a 1419-residue protein sequence, read N- to C-terminus: Multidrug resistance protein 1 (1419 aa).

Positions 1–37 (MGKEQKEKKDGNLSIKEEVEKELNKKSTAELFRKIKN) are r domain; regulates transporter activity. At 1-60 (MGKEQKEKKDGNLSIKEEVEKELNKKSTAELFRKIKNEKISFFLPFKCLPAQHRKLLFIS) the chain is on the cytoplasmic side. Residues 58 to 345 (FISFVCAVLS…ILPNITEYMK (288 aa)) enclose the ABC transmembrane type-1 1 domain. The helical transmembrane segment at 61–81 (FVCAVLSGGTLPFFISVFGVI) threads the bilayer. Residues 82–90 (LKNMNLGDD) are Vacuolar-facing. Residues 91-111 (INPIILSLVSIGLVQFILSMI) form a helical membrane-spanning segment. Over 112–168 (SSYCMDVITSKILKTLKLEYLRSVFYQDGQFHDNNPGSKLRSDLDFYLEQVSSGIGT) the chain is Cytoplasmic. Residues 169–189 (KFITIFTYASSFLGLYIWSLI) form a helical membrane-spanning segment. Over 190 to 191 (KN) the chain is Vacuolar. Residues 192 to 212 (ARLTLCITCVFPLIYVCGVIC) traverse the membrane as a helical segment. The Cytoplasmic portion of the chain corresponds to 213 to 275 (NKKVKLNKKT…KYILKANFVE (63 aa)). Residues 276–296 (ALHIGLINGLILVSYAFGFWY) traverse the membrane as a helical segment. Topologically, residues 297 to 316 (GTRIIINSATNQYPNNDFNG) are vacuolar. A helical membrane pass occupies residues 317–337 (ASVISILLGVLISMFMLTIIL). Residues 338 to 788 (PNITEYMKAL…YKEIFSYKKD (451 aa)) are Cytoplasmic-facing. An ABC transporter 1 domain is found at 378-662 (IEFKNVRFHY…NNNNNNNNNK (285 aa)). ATP contacts are provided by Y387, T389, R390, S415, C417, G418, K419, S420, T421, Q462, K562, S564, G566, and Q567. Residue Q462 coordinates Mg(2+). 2 disordered regions span residues 639–665 (ERSD…KINN) and 697–752 (SSNK…TAEN). 2 stretches are compositionally biased toward low complexity: residues 643-665 (NNNN…KINN) and 697-715 (SSNK…NKSS). Polar residues predominate over residues 723 to 749 (GNDADNMNSLSIHENENISNNRNCKNT). A helical membrane pass occupies residues 789–809 (VTIIFFSILVAGGLYPVFALL). Positions 791–1083 (IIFFSILVAG…GSYAGKLMSL (293 aa)) constitute an ABC transmembrane type-1 2 domain. Topologically, residues 810 to 829 (YARYVSTLFDFANLEYNSNK) are vacuolar. The chain crosses the membrane as a helical span at residues 830–850 (YSIYILLIAIAMFISETLKNY). Over 851–907 (YNNKIGEKVEKTMKRRLFENILYQEMSFFDQDKNTPGVLSAHINRDVHLLKTGLVNN) the chain is Cytoplasmic. The next 2 helical transmembrane spans lie at 908-928 (IVIF…SFYF) and 929-949 (CPIV…VFAV). At 950–1032 (RARLTKSKEI…RIIVNAALWG (83 aa)) the chain is on the cytoplasmic side. The chain crosses the membrane as a helical span at residues 1033-1053 (FSQSAQLFINSFAYWFGSFLI). The Vacuolar portion of the chain corresponds to 1054–1057 (KRGT). Residues 1058–1078 (ILVDDFMKSLFTFIFTGSYAG) traverse the membrane as a helical segment. Residues 1079 to 1419 (KLMSLKGDSE…IYKKYVKLAK (341 aa)) are Cytoplasmic-facing. The ABC transporter 2 domain maps to 1126 to 1416 (VDIKDVNFRY…QDGIYKKYVK (291 aa)). 13 residues coordinate ATP: Y1135, R1138, T1163, G1164, G1166, K1167, S1168, T1169, Q1256, L1312, S1313, G1315, and Q1316. Residue S1168 coordinates Mg(2+). Q1256 lines the Mg(2+) pocket.

It belongs to the ABC transporter superfamily. ABCB family. Multidrug resistance exporter (TC 3.A.1.201) subfamily.

Its subcellular location is the vacuole membrane. The catalysed reaction is ATP + H2O + xenobioticSide 1 = ADP + phosphate + xenobioticSide 2.. Its function is as follows. Energy-dependent efflux pump responsible for decreased drug accumulation in multidrug-resistant cells. Transports lumefantrine, mefloquine, chloroquine, quinine, quinidine, amodiaquine, piperaquine, dihydroartemisinin and quinacrine. The protein is Multidrug resistance protein 1 of Plasmodium falciparum (isolate 3D7).